Reading from the N-terminus, the 244-residue chain is Acetylglutamate kinase (244 aa).

Residues 40-41 (GG), Arg-62, and Asn-155 contribute to the substrate site.

The protein belongs to the acetylglutamate kinase family. ArgB subfamily.

It localises to the cytoplasm. The catalysed reaction is N-acetyl-L-glutamate + ATP = N-acetyl-L-glutamyl 5-phosphate + ADP. Its pathway is amino-acid biosynthesis; L-arginine biosynthesis; N(2)-acetyl-L-ornithine from L-glutamate: step 2/4. Its function is as follows. Catalyzes the ATP-dependent phosphorylation of N-acetyl-L-glutamate. This Leuconostoc mesenteroides subsp. mesenteroides (strain ATCC 8293 / DSM 20343 / BCRC 11652 / CCM 1803 / JCM 6124 / NCDO 523 / NBRC 100496 / NCIMB 8023 / NCTC 12954 / NRRL B-1118 / 37Y) protein is Acetylglutamate kinase.